Here is a 137-residue protein sequence, read N- to C-terminus: ATP synthase epsilon chain, chloroplastic (137 aa).

The protein belongs to the ATPase epsilon chain family. F-type ATPases have 2 components, CF(1) - the catalytic core - and CF(0) - the membrane proton channel. CF(1) has five subunits: alpha(3), beta(3), gamma(1), delta(1), epsilon(1). CF(0) has three main subunits: a, b and c.

It localises to the plastid. Its subcellular location is the chloroplast thylakoid membrane. In terms of biological role, produces ATP from ADP in the presence of a proton gradient across the membrane. This chain is ATP synthase epsilon chain, chloroplastic, found in Medicago sativa (Alfalfa).